The sequence spans 679 residues: Methionine--tRNA ligase (679 aa).

Zn(2+)-binding residues include cysteine 147, cysteine 150, cysteine 160, and cysteine 163. Residues 332–336 (KISTS) carry the 'KMSKS' region motif. Residue threonine 335 coordinates ATP. The 102-residue stretch at 578-679 (DFMKLDIRVG…REVKPGSEVK (102 aa)) folds into the tRNA-binding domain.

This sequence belongs to the class-I aminoacyl-tRNA synthetase family. MetG type 1 subfamily. Homodimer. Zn(2+) is required as a cofactor.

It localises to the cytoplasm. The catalysed reaction is tRNA(Met) + L-methionine + ATP = L-methionyl-tRNA(Met) + AMP + diphosphate. Its function is as follows. Is required not only for elongation of protein synthesis but also for the initiation of all mRNA translation through initiator tRNA(fMet) aminoacylation. In Bacteroides fragilis (strain YCH46), this protein is Methionine--tRNA ligase.